Reading from the N-terminus, the 396-residue chain is MTAVQRITVLGATGSIGLSTLDVIARHPERYQVYALSGYTRIDQLLALCVLHCPAYAVVPNGEAAVRLREGLAAAGCATEVLEGEAGLCEVAAAPEVDAVMAAIVGAAGLRPTLAAVEAGKKVLLANKEALVMSGALFMEAVRRSGAVLLPIDSEHNAIFQCLPGDYDRGLSQVGVRRILLTASGGPFRETPQADLADVTPEQACAHPNWSMGRKISVDSASMMNKGLELIEACWLFDAAPDKVEVVVHPQSVIHSLVDYVDGSVLAQLGNPDMRTPIANALAWPERIDSGVAPLDLFAIARLDFQAPDELRFPCLRLARQAAEAGNSAPAVLNAANEVAVEAFLERRIRFPEIAGMIEQVLAQEPVVPVPSLDAVFAADQRARELSREWLRRHGR.

Residues T13, G14, S15, I16, and N127 each contribute to the NADPH site. K128 serves as a coordination point for 1-deoxy-D-xylulose 5-phosphate. E129 contributes to the NADPH binding site. A Mn(2+)-binding site is contributed by D153. Positions 154, 155, 184, and 207 each coordinate 1-deoxy-D-xylulose 5-phosphate. Position 155 (E155) interacts with Mn(2+). Residue G213 participates in NADPH binding. The 1-deoxy-D-xylulose 5-phosphate site is built by S220, N225, K226, and E229. Residue E229 coordinates Mn(2+).

This sequence belongs to the DXR family. Mg(2+) is required as a cofactor. Requires Mn(2+) as cofactor.

It catalyses the reaction 2-C-methyl-D-erythritol 4-phosphate + NADP(+) = 1-deoxy-D-xylulose 5-phosphate + NADPH + H(+). It functions in the pathway isoprenoid biosynthesis; isopentenyl diphosphate biosynthesis via DXP pathway; isopentenyl diphosphate from 1-deoxy-D-xylulose 5-phosphate: step 1/6. Catalyzes the NADPH-dependent rearrangement and reduction of 1-deoxy-D-xylulose-5-phosphate (DXP) to 2-C-methyl-D-erythritol 4-phosphate (MEP). The protein is 1-deoxy-D-xylulose 5-phosphate reductoisomerase of Pseudomonas putida (strain W619).